Consider the following 366-residue polypeptide: Protein lifeguard 1 (366 aa).

Residues 1-141 (MSHEKSFLVS…GPPSYYDNQD (141 aa)) form a disordered region. Composition is skewed to pro residues over residues 14–44 (YPPPNPGYPGGPQPSMAPYPGAPYPQAPFQP) and 67–109 (GPYP…PNPY). 7 consecutive transmembrane segments (helical) span residues 160–180 (VFLVLTLQLSVTLSTVAVFTF), 192–212 (VWTYYVSYAIFFVSLIVLSCC), 223–243 (LVALSILTVSLSYMVGMIASF), 248–268 (AVIMAVGITTTVCFTVVIFSM), 278–298 (VGVLLVSVVVLILFAILCIFI), 302–322 (VLEIVYASLGALLFTCFLAVD), and 341–361 (FAALNLYTDIINIFLYILTII).

Belongs to the BI1 family. LFG subfamily.

The protein localises to the membrane. Functionally, potential apoptotic regulator. This chain is Protein lifeguard 1 (GRINA), found in Bos taurus (Bovine).